We begin with the raw amino-acid sequence, 297 residues long: HTH-type transcriptional regulator ArgP (297 aa).

The region spanning 4-60 (PDYRTLQALDAVIRERGFERAAQKLCITQSAVSQRIKQLENMFGQPLLVRTVPPRPT) is the HTH lysR-type domain. The segment at residues 21–40 (FERAAQKLCITQSAVSQRIK) is a DNA-binding region (H-T-H motif).

Belongs to the LysR transcriptional regulatory family. Homodimer.

In terms of biological role, controls the transcription of genes involved in arginine and lysine metabolism. The chain is HTH-type transcriptional regulator ArgP from Klebsiella pneumoniae subsp. pneumoniae (strain ATCC 700721 / MGH 78578).